The primary structure comprises 181 residues: Small ribosomal subunit protein uS4 (181 aa).

One can recognise an S4 RNA-binding domain in the interval 104-166; sequence RRLQTIVYKK…VTSSFKSRPP (63 aa).

Belongs to the universal ribosomal protein uS4 family. Part of the 30S ribosomal subunit. Contacts protein S5. The interaction surface between S4 and S5 is involved in control of translational fidelity.

One of the primary rRNA binding proteins, it binds directly to 16S rRNA where it nucleates assembly of the body of the 30S subunit. In terms of biological role, with S5 and S12 plays an important role in translational accuracy. This is Small ribosomal subunit protein uS4 from Saccharolobus islandicus (strain Y.N.15.51 / Yellowstone #2) (Sulfolobus islandicus).